The sequence spans 544 residues: Probable protein kinase UbiB (544 aa).

The helical transmembrane segment at 1–21 (MIFGELRRLYLIIGVMLSYGL) threads the bilayer. A Protein kinase domain is found at 123 to 500 (DFQQEPLASA…HVRQSQSRFL (378 aa)). ATP-binding positions include 129–137 (LASASIAQV) and Lys151. The active-site Proton acceptor is Asp286. 2 consecutive transmembrane segments (helical) span residues 499 to 519 (FLFG…TQGA) and 520 to 540 (DEGS…IIGW).

The protein belongs to the ABC1 family. UbiB subfamily.

The protein localises to the cell inner membrane. It functions in the pathway cofactor biosynthesis; ubiquinone biosynthesis [regulation]. Functionally, is probably a protein kinase regulator of UbiI activity which is involved in aerobic coenzyme Q (ubiquinone) biosynthesis. The chain is Probable protein kinase UbiB from Sodalis glossinidius (strain morsitans).